Here is a 1247-residue protein sequence, read N- to C-terminus: SAM and SH3 domain-containing protein 1 (1247 aa).

The disordered stretch occupies residues 1–39; that stretch reads MEDAGAAGPGPEPEPEPEPEPEPAPEPEPEPKPGAGTSE. The span at 13-28 shows a compositional bias: acidic residues; it reads PEPEPEPEPEPAPEPE. Phosphoserine is present on Ser-90. Disordered stretches follow at residues 126 to 145, 221 to 257, and 316 to 344; these read VERK…VGKG, AALD…ESVK, and FFDG…LDTW. Ser-248 bears the Phosphoserine mark. The span at 331-343 shows a compositional bias: low complexity; it reads SLTTSPSSSSLDT. The residue at position 407 (Ser-407) is a Phosphoserine. The tract at residues 449–573 is disordered; the sequence is SLGKKVKSVK…DFTPSPYDTD (125 aa). Composition is skewed to low complexity over residues 468 to 484 and 505 to 523; these read KYSS…DGMP and GGSV…SMSG. Residues 524-536 are compositionally biased toward polar residues; that stretch reads QTVSTTDSSTSNR. Residues 554-615 form the SH3 domain; that stretch reads PFCGRARVHT…KFIYVDVLSE (62 aa). A Phosphoserine modification is found at Ser-614. Disordered stretches follow at residues 616 to 639 and 713 to 810; these read DEEK…KSVE and DSQG…LNKN. Residues 622 to 631 are compositionally biased toward basic residues; sequence RPTRRRRKGR. One can recognise an SAM 1 domain in the interval 633-697; the sequence is PQPKSVEDLL…LTAVELLQEY (65 aa). The span at 746–765 shows a compositional bias: polar residues; that stretch reads SAKSSTEPSLKSFSRNQLGN. Phosphoserine is present on residues Ser-821 and Ser-839. Disordered regions lie at residues 846–884, 903–946, and 971–1065; these read EPGA…PLEQ, PQKL…LART, and DAEQ…SELP. The segment at 852–860 is required for interaction with TRAF6; the sequence is DVPTEVTEP. Thr-858 is modified (phosphothreonine). The segment covering 1050 to 1060 has biased composition (pro residues); it reads GSPPSTRPPPW. The 65-residue stretch at 1177–1241 folds into the SAM 2 domain; that stretch reads GCISSVSDWL…LSAARLFKLP (65 aa).

Interacts with GNAS. Interacts with IQGAP1. Interacts with TRAF6 (via C-terminus); the interaction is LPS-dependent. Interacts with MAP3K7, CHUK and IKBKB. In terms of tissue distribution, expressed ubiquitously, with highest levels in lung, placenta, spleen and thymus. Down-regulated in the majority (74%) of breast tumors in comparison with corresponding normal breast epithelial tissues. Expressed in the epidermis, epidermal keratinocytes, dermal fibroblasts and melanocytes.

It localises to the cytoplasm. In terms of biological role, is a positive regulator of NF-kappa-B signaling downstream of TLR4 activation. It acts as a scaffold molecule to assemble a molecular complex that includes TRAF6, MAP3K7, CHUK and IKBKB, thereby facilitating NF-kappa-B signaling activation. Regulates TRAF6 and MAP3K7 ubiquitination. Involved in the regulation of cell mobility. Regulates lipolysaccharide (LPS)-induced endothelial cell migration. Is involved in the regulation of skin pigmentation through the control of melanocyte migration in the epidermis. The polypeptide is SAM and SH3 domain-containing protein 1 (SASH1) (Homo sapiens (Human)).